The primary structure comprises 184 residues: Type-1 fimbrial protein, A chain (184 aa).

Positions 1 to 22 are cleaved as a signal peptide; that stretch reads MKHKLMTSTIASLMFVAGAAVA. A disulfide bridge links C46 with C86.

This sequence belongs to the fimbrial protein family.

It is found in the fimbrium. Functionally, fimbriae (also called pili), polar filaments radiating from the surface of the bacterium to a length of 0.5-1.5 micrometers and numbering 100-300 per cell, enable bacteria to colonize the epithelium of specific host organs. The sequence is that of Type-1 fimbrial protein, A chain (fimA) from Salmonella typhi.